We begin with the raw amino-acid sequence, 270 residues long: MIOREX complex component 3 (270 aa).

A mitochondrion-targeting transit peptide spans Met1 to Val12.

In terms of assembly, associates with the mitochondrial ribosome.

Its subcellular location is the mitochondrion. In terms of biological role, component of MIOREX complexes, large expressome-like assemblies of ribosomes with factors involved in all the steps of post-transcriptional gene expression. The chain is MIOREX complex component 3 from Saccharomyces cerevisiae (strain ATCC 204508 / S288c) (Baker's yeast).